A 531-amino-acid polypeptide reads, in one-letter code: Apolipoprotein N-acyltransferase (531 aa).

The next 7 helical transmembrane spans lie at 8–28 (IILL…LLAV), 34–54 (FGIF…IDGV), 69–89 (PAAI…WWLG), 105–125 (LAVV…VVIA), 136–156 (IAAL…VFTG), 178–198 (VVNL…PALI), and 207–227 (GLAI…YRLA). Residues 243–493 (VQPVIDQAKK…RGVLDTILPG (251 aa)) enclose the CN hydrolase domain. The active-site Proton acceptor is Glu-287. The active site involves Lys-351. The active-site Nucleophile is the Cys-405. The helical transmembrane segment at 507–527 (IFWLSMAILSIVASFSRFGFN) threads the bilayer.

The protein belongs to the CN hydrolase family. Apolipoprotein N-acyltransferase subfamily.

Its subcellular location is the cell inner membrane. The enzyme catalyses N-terminal S-1,2-diacyl-sn-glyceryl-L-cysteinyl-[lipoprotein] + a glycerophospholipid = N-acyl-S-1,2-diacyl-sn-glyceryl-L-cysteinyl-[lipoprotein] + a 2-acyl-sn-glycero-3-phospholipid + H(+). It functions in the pathway protein modification; lipoprotein biosynthesis (N-acyl transfer). Its function is as follows. Catalyzes the phospholipid dependent N-acylation of the N-terminal cysteine of apolipoprotein, the last step in lipoprotein maturation. In Sinorhizobium medicae (strain WSM419) (Ensifer medicae), this protein is Apolipoprotein N-acyltransferase.